The primary structure comprises 453 residues: Choline kinase alpha (453 aa).

Residues 22 to 81 (CGGSAAPTPGVGQQRDAAGELESKQLGGRSQPLALPPPPPPPLPLPPPPSPPLADEQPEP) form a disordered region. A compositionally biased stretch (pro residues) spans 55 to 73 (ALPPPPPPPLPLPPPPSPP). Serine 71 bears the Phosphoserine mark. Residues 113–119 (RGGLSNM), arginine 142, and 203–209 (QFIPSRR) each bind ATP. 115–117 (GLS) is a phosphocholine binding site. Residue lysine 243 is modified to N6-acetyllysine. Serine 275 carries the post-translational modification Phosphoserine. Residues glutamine 304 and aspartate 326 each coordinate ATP.

The protein belongs to the choline/ethanolamine kinase family. Heterodimer with CHKB. Homodimer. In terms of assembly, monomer; acetylation by KAT5 promotes dissociation of the homodimer and monomerization. Post-translationally, phosphorylated at Ser-275 by AMPK in response to glucose deprivation, leading to localization to lipid droplets. Acetylated by KAT5 at Lys-243 following phosphorylation by AMPK, leading to monomerization and conversion into a tyrosine-protein kinase. As to expression, testis, brain, lung, kidney and liver.

Its subcellular location is the cytoplasm. The protein localises to the cytosol. The protein resides in the lipid droplet. The enzyme catalyses choline + ATP = phosphocholine + ADP + H(+). It carries out the reaction ethanolamine + ATP = phosphoethanolamine + ADP + H(+). The catalysed reaction is L-tyrosyl-[protein] + ATP = O-phospho-L-tyrosyl-[protein] + ADP + H(+). The protein operates within phospholipid metabolism; phosphatidylcholine biosynthesis; phosphocholine from choline: step 1/1. Its pathway is phospholipid metabolism; phosphatidylethanolamine biosynthesis; phosphatidylethanolamine from ethanolamine: step 1/3. Its function is as follows. Plays a key role in phospholipid biosynthesis by catalyzing the phosphorylation of free choline to phosphocholine, the first step in phosphatidylcholine biosynthesis. Also phosphorylates ethanolamine, thereby contributing to phosphatidylethanolamine biosynthesis. Has higher activity with choline. In terms of biological role, this isoform plays a key role in lipolysis of lipid droplets following glucose deprivation. In response to glucose deprivation, phosphorylated by AMPK, promoting localization to lipid droplets. Phosphorylation is followed by acetylation by KAT5, leading to dissociation of the homodimer into a monomer. Monomeric CHKA isoform 1 is converted into a tyrosine-protein kinase, which phosphorylates lipid droplet structural proteins PLIN2 and PLIN3, leading to lipolysis of lipid droplets. This is Choline kinase alpha (Chka) from Rattus norvegicus (Rat).